The primary structure comprises 300 residues: Estradiol 17-beta-dehydrogenase 11 (300 aa).

The first 19 residues, 1-19 (MKFLLDILLLLPLLIVCSL), serve as a signal peptide directing secretion. 40 to 64 (LITGAGHGIGRLTAYEFAKLKSKLV) provides a ligand contact to NADP(+). Ser-172 provides a ligand contact to substrate. Tyr-185 serves as the catalytic Proton acceptor.

It belongs to the short-chain dehydrogenases/reductases (SDR) family. 17-beta-HSD 3 subfamily. In terms of tissue distribution, present at high level in steroidogenic cells such as syncytiotrophoblasts, sebaceous gland, Leydig cells, and granulosa cells of the dominant follicle and corpus luteum. In lung, it is detected in the ciliated epithelium and in acini of adult trachea, in bronchioles, but not in alveoli. In the eye, it is detected in the nonpigmented epithelium of the ciliary body and, at lower level, in the inner nuclear layer of the retina (at protein level). Widely expressed. Highly expressed in retina, pancreas, kidney, liver, lung, adrenal, small intestine, ovary and heart.

Its subcellular location is the endoplasmic reticulum. It localises to the lipid droplet. The catalysed reaction is 17beta-estradiol + NAD(+) = estrone + NADH + H(+). The enzyme catalyses 17beta-estradiol + NADP(+) = estrone + NADPH + H(+). In terms of biological role, can convert androstan-3-alpha,17-beta-diol (3-alpha-diol) to androsterone in vitro, suggesting that it may participate in androgen metabolism during steroidogenesis. May act by metabolizing compounds that stimulate steroid synthesis and/or by generating metabolites that inhibit it. Has no activity toward DHEA (dehydroepiandrosterone), or A-dione (4-androste-3,17-dione), and only a slight activity toward testosterone to A-dione. Tumor-associated antigen in cutaneous T-cell lymphoma. The chain is Estradiol 17-beta-dehydrogenase 11 (HSD17B11) from Homo sapiens (Human).